Reading from the N-terminus, the 358-residue chain is Probable protein phosphatase 2C 68 (358 aa).

Residues 74–352 (RHGAASVAGR…DNISVVVVDL (279 aa)) form the PPM-type phosphatase domain. Positions 117, 118, 298, and 343 each coordinate Mn(2+).

It belongs to the PP2C family. Requires Mg(2+) as cofactor. The cofactor is Mn(2+).

It is found in the nucleus. Its subcellular location is the cytoplasm. The protein localises to the cytosol. The enzyme catalyses O-phospho-L-seryl-[protein] + H2O = L-seryl-[protein] + phosphate. It catalyses the reaction O-phospho-L-threonyl-[protein] + H2O = L-threonyl-[protein] + phosphate. In terms of biological role, involved in the regulation of abiotic stress responses. Acts as a negative regulator of abscisic acid (ABA) signaling and positive regulator of abiotic stress signaling. May be involved in panicle development. The polypeptide is Probable protein phosphatase 2C 68 (Oryza sativa subsp. japonica (Rice)).